The sequence spans 900 residues: Serine-rich coiled-coil domain-containing protein 1 (900 aa).

Disordered stretches follow at residues 1-100 (MGDS…HSNM) and 156-178 (KSEG…QSTR). Positions 29-56 (LPSSPSSSNTVGVHSSSPSSTNSSSGST) are enriched in low complexity. A compositionally biased stretch (polar residues) spans 81-100 (EPTNQNLSISNGAQPGHSNM). The stretch at 673–707 (MKDECSMLKLQLKEKDELISQLQEELGKVRHLQKA) forms a coiled coil.

Belongs to the CCSER family.

This chain is Serine-rich coiled-coil domain-containing protein 1 (CCSER1), found in Homo sapiens (Human).